Reading from the N-terminus, the 236-residue chain is Ascorbate-specific transmembrane electron transporter 2 (236 aa).

Residues 1–13 (MGLGLGVRAAPFT) lie on the Cytoplasmic side of the membrane. The chain crosses the membrane as a helical span at residues 14 to 34 (YAAHALAVAAAAMVLVWAIYF). The Cytochrome b561 domain maps to 15-219 (AAHALAVAAA…FGASVVVAAI (205 aa)). The Extracellular segment spans residues 35 to 50 (RGGLAIEATNKNLIFN). A helical membrane pass occupies residues 51–71 (VHPVLMLIGYIIIGGEAIMVY). Histidine 52 contributes to the heme b binding site. 67–75 (AIMVYRVLP) is an L-ascorbate binding site. Residues 72–84 (RVLPTSNHETNKL) lie on the Cytoplasmic side of the membrane. A helical transmembrane segment spans residues 85-105 (IHLVLHGIALVLGAVGIYFAF). Residues histidine 86 and histidine 120 each coordinate heme b. The Extracellular portion of the chain corresponds to 106–122 (KNHNESGIANLYSLHSW). 116 to 125 (LYSLHSWIGI) lines the monodehydro-L-ascorbate radical pocket. The chain crosses the membrane as a helical span at residues 123-143 (IGIGTITLYGIQWIVGFVTFF). Residues 144–153 (FPGAAPNVKK) lie on the Cytoplasmic side of the membrane. A helical membrane pass occupies residues 154-174 (GVLPWHILFGLFVYILALANA). Residue histidine 159 participates in heme b binding. Over 175-201 (ELGFLEKLTFLESSGLDKYGTEAFLVN) the chain is Extracellular. A helical transmembrane segment spans residues 202–222 (FTALVVVLFGASVVVAAIAPV). The Cytoplasmic portion of the chain corresponds to 223–236 (RLEEPQGYVPIPEN).

Requires heme b as cofactor.

It is found in the membrane. Two-heme-containing cytochrome. Catalyzes ascorbate-dependent trans-membrane electron transfer by utilizing a concerted H(+)/e(-) transfer mechanism. The sequence is that of Ascorbate-specific transmembrane electron transporter 2 from Zea mays (Maize).